We begin with the raw amino-acid sequence, 393 residues long: Polygalacturonase (393 aa).

A signal peptide spans 1–23; that stretch reads MANRRSLFSLSLIFVFMINSAIA. 6 PbH1 repeats span residues 115 to 136, 178 to 204, 205 to 226, 228 to 248, 258 to 279, and 288 to 309; these read VNGV…WACK, FQNV…HVQM, SSGV…SIGP, TSNL…SIGS, VQNV…RIKS, and ARNI…VIDQ. Aspartate 219 acts as the Proton donor in catalysis. A disulfide bond links cysteine 221 and cysteine 238. Histidine 242 is an active-site residue. An N-linked (GlcNAc...) asparagine glycan is attached at asparagine 260. Cystine bridges form between cysteine 349-cysteine 355 and cysteine 376-cysteine 392.

Belongs to the glycosyl hydrolase 28 family.

It is found in the secreted. The protein resides in the cell wall. It carries out the reaction (1,4-alpha-D-galacturonosyl)n+m + H2O = (1,4-alpha-D-galacturonosyl)n + (1,4-alpha-D-galacturonosyl)m.. In terms of biological role, acts in concert with the pectinesterase, in the ripening process. Is involved in cell wall metabolism, specifically in polyuronide degradation. The protein is Polygalacturonase of Prunus persica (Peach).